The primary structure comprises 152 residues: ADP-ribose glycohydrolase OARD1 (152 aa).

A2 carries the post-translational modification N-acetylalanine. Residues 2–152 form the Macro domain; that stretch reads ASSLNEDPEG…TDIKITVYTL (151 aa). At S4 the chain carries Phosphoserine. L21 provides a ligand contact to substrate. Residue K84 is the Nucleophile of the active site. Substrate contacts are provided by residues 119 to 125 and L152; that span reads RIGCGLD. D125 functions as the Proton acceptor in the catalytic mechanism.

Ubiquitous.

Its subcellular location is the nucleus. The protein resides in the nucleoplasm. The protein localises to the nucleolus. It is found in the chromosome. It catalyses the reaction 2''-O-acetyl-ADP-D-ribose + H2O = ADP-D-ribose + acetate + H(+). It carries out the reaction 5-O-(ADP-D-ribosyl)-L-glutamyl-[protein] + H2O = L-glutamyl-[protein] + ADP-D-ribose + H(+). The enzyme catalyses alpha-NAD(+) + H2O = ADP-D-ribose + nicotinamide + H(+). With respect to regulation, subject to competitive inhibition by the product ADP-ribose. Its function is as follows. ADP-ribose glycohydrolase that hydrolyzes ADP-ribose and acts on different substrates, such as proteins ADP-ribosylated on glutamate and O-acetyl-ADP-D-ribose. Specifically acts as a glutamate mono-ADP-ribosylhydrolase by mediating the removal of mono-ADP-ribose attached to glutamate residues on proteins. Does not act on poly-ADP-ribosylated proteins: the poly-ADP-ribose chain of poly-ADP-ribosylated glutamate residues must by hydrolyzed into mono-ADP-ribosylated glutamate by PARG to become a substrate for OARD1. Deacetylates O-acetyl-ADP ribose, a signaling molecule generated by the deacetylation of acetylated lysine residues in histones and other proteins. Catalyzes the deacylation of O-acetyl-ADP-ribose, O-propionyl-ADP-ribose and O-butyryl-ADP-ribose, yielding ADP-ribose plus acetate, propionate and butyrate, respectively. The protein is ADP-ribose glycohydrolase OARD1 of Homo sapiens (Human).